The chain runs to 201 residues: IMP cyclohydrolase (201 aa).

It belongs to the archaeal IMP cyclohydrolase family.

The catalysed reaction is IMP + H2O = 5-formamido-1-(5-phospho-D-ribosyl)imidazole-4-carboxamide. The protein operates within purine metabolism; IMP biosynthesis via de novo pathway; IMP from 5-formamido-1-(5-phospho-D-ribosyl)imidazole-4-carboxamide: step 1/1. Catalyzes the cyclization of 5-formylamidoimidazole-4-carboxamide ribonucleotide to IMP. The sequence is that of IMP cyclohydrolase from Methanocella arvoryzae (strain DSM 22066 / NBRC 105507 / MRE50).